The sequence spans 484 residues: tRNA-2-methylthio-N(6)-dimethylallyladenosine synthase (484 aa).

The region spanning 29 to 149 (GVFHIHTLGC…LPKLLDQNRA (121 aa)) is the MTTase N-terminal domain. Residues C38, C78, C112, C186, C190, and C193 each contribute to the [4Fe-4S] cluster site. The Radical SAM core domain maps to 172-401 (RASRISSWVA…VALQEQITEE (230 aa)). The 71-residue stretch at 404–474 (ATFEGRDVEV…RHNLLADPDV (71 aa)) folds into the TRAM domain.

This sequence belongs to the methylthiotransferase family. MiaB subfamily. Monomer. [4Fe-4S] cluster serves as cofactor.

It is found in the cytoplasm. The catalysed reaction is N(6)-dimethylallyladenosine(37) in tRNA + (sulfur carrier)-SH + AH2 + 2 S-adenosyl-L-methionine = 2-methylsulfanyl-N(6)-dimethylallyladenosine(37) in tRNA + (sulfur carrier)-H + 5'-deoxyadenosine + L-methionine + A + S-adenosyl-L-homocysteine + 2 H(+). Catalyzes the methylthiolation of N6-(dimethylallyl)adenosine (i(6)A), leading to the formation of 2-methylthio-N6-(dimethylallyl)adenosine (ms(2)i(6)A) at position 37 in tRNAs that read codons beginning with uridine. The sequence is that of tRNA-2-methylthio-N(6)-dimethylallyladenosine synthase from Bifidobacterium longum subsp. infantis (strain ATCC 15697 / DSM 20088 / JCM 1222 / NCTC 11817 / S12).